The primary structure comprises 523 residues: Sialate O-acetylesterase (523 aa).

Positions 1-23 (MVAPGLVLGLVLPLILWADRSAG) are cleaved as a signal peptide. Asparagine 107, asparagine 138, asparagine 267, asparagine 290, asparagine 401, and asparagine 422 each carry an N-linked (GlcNAc...) asparagine glycan.

It localises to the lysosome. The enzyme catalyses N-acetyl-9-O-acetylneuraminate + H2O = N-acetylneuraminate + acetate + H(+). It carries out the reaction an Ac-O-9-sialoglycoconjugate + H2O = a sialoglycoconjugate + acetate + H(+). Catalyzes the removal of O-acetyl ester groups from position 9 of the free diacetylated sialate N-acetyl-9-O-acetylneuraminate (Neu5,9Ac2) in the cytosol and of the diacetylated sialate residues of sialylglycoconjugates in the lysosomes. Together with the sialate-O-acetyltransferase they regulate the balance of acetylated sialoglycoconjugates, key players in various processes such as cell-cell interactions, host-pathogen recognition, and tumor antigenicity. The protein is Sialate O-acetylesterase (SIAE) of Pongo abelii (Sumatran orangutan).